The primary structure comprises 141 residues: MNEDALEAVRSRTFFAILTVFYSIFRCCLAYCNKGDDDHLIHPSHSLHVIKATGINPSVLLSIPVVSFNANAFKDNIECVVCLSKFIDEDKARVLPSCNHCFHFDFTDTWLHSDYTCPNCRKNVEEIQNHELSLSPNPNSG.

Residues 14–32 (FFAILTVFYSIFRCCLAYC) traverse the membrane as a helical segment. The RING-type; degenerate zinc finger occupies 79 to 121 (CVVCLSKFIDEDKARVLPSCNHCFHFDFTDTWLHSDYTCPNCR).

The protein belongs to the RING-type zinc finger family. ATL subfamily.

It localises to the membrane. The catalysed reaction is S-ubiquitinyl-[E2 ubiquitin-conjugating enzyme]-L-cysteine + [acceptor protein]-L-lysine = [E2 ubiquitin-conjugating enzyme]-L-cysteine + N(6)-ubiquitinyl-[acceptor protein]-L-lysine.. Its pathway is protein modification; protein ubiquitination. In Arabidopsis thaliana (Mouse-ear cress), this protein is Putative RING-H2 finger protein ATL62 (ATL62).